The sequence spans 387 residues: Gamma-butyrobetaine dioxygenase (387 aa).

Positions 38, 40, 43, and 82 each coordinate Zn(2+). 3 residues coordinate Fe cation: histidine 202, aspartate 204, and histidine 347. Phosphoserine is present on serine 351.

Belongs to the gamma-BBH/TMLD family. It depends on Fe(2+) as a cofactor. The cofactor is L-ascorbate. Expressed in the liver and in some extend in the testis and the epididymis.

The protein localises to the cytoplasm. It carries out the reaction 4-(trimethylamino)butanoate + 2-oxoglutarate + O2 = carnitine + succinate + CO2. Its pathway is amine and polyamine biosynthesis; carnitine biosynthesis. Its function is as follows. Catalyzes the formation of L-carnitine from gamma-butyrobetaine. This Rattus norvegicus (Rat) protein is Gamma-butyrobetaine dioxygenase (Bbox1).